The chain runs to 62 residues: UPF0339 protein Atu5359 (62 aa).

The protein belongs to the UPF0339 family.

The chain is UPF0339 protein Atu5359 from Agrobacterium fabrum (strain C58 / ATCC 33970) (Agrobacterium tumefaciens (strain C58)).